The primary structure comprises 742 residues: Conidiogenone synthase (742 aa).

The tract at residues 1–332 is terpene cyclase; that stretch reads MGETIADVYA…SLCVPRYFKV (332 aa). A Mg(2+)-binding site is contributed by Asp-97. Residues Asp-97, 190–193, Asn-234, 238–242, and 328–329 contribute to the substrate site; these read RIVD, SWDKE, and RY. Positions 97-101 match the DDXXD 1 motif; it reads DDETD. The NSE/DTE signature appears at 234–242; the sequence is NDLFSWDKE. The tract at residues 333 to 742 is prenyltransferase; the sequence is ERNPYKDHLE…LRAMEEASQK (410 aa). Residues Lys-414, Arg-417, and His-446 each coordinate isopentenyl diphosphate. Residues Asp-453 and Asp-457 each contribute to the Mg(2+) site. A DDXXD 2 motif is present at residues 453-457; the sequence is DDIQD. Residue Arg-462 participates in dimethylallyl diphosphate binding. An isopentenyl diphosphate-binding site is contributed by Arg-463. Dimethylallyl diphosphate contacts are provided by Lys-539, Thr-540, Gln-575, Asn-582, Lys-592, and Lys-602. A disordered region spans residues 701-724; the sequence is EAHKSDSAWKVNQRRAWKGSQKNG.

In the N-terminal section; belongs to the terpene synthase family. This sequence in the C-terminal section; belongs to the FPP/GGPP synthase family. Hexamer. Mg(2+) serves as cofactor.

It carries out the reaction isopentenyl diphosphate + (2E,6E)-farnesyl diphosphate = (2E,6E,10E)-geranylgeranyl diphosphate + diphosphate. It participates in secondary metabolite biosynthesis; terpenoid biosynthesis. Bifunctional terpene synthase; part of the gene cluster that mediates the biosynthesis of conidiogenone, a diterpene known to induce the conidiation. The bifunctional terpene synthase PrDS converts isopentenyl diphosphate (IPP) and dimethylallyl diphosphate (DMAPP) into deoxyconidiogenol. The C-terminal prenyltransferase (PT) domain of PrDS catalyzes formation of GGPP, whereas the N-terminal terpene cyclase (TC) domain catalyzes the cyclization of GGPP into deoxyconidiogenol. The cytochrome P450 monooxygenase PrP450 then catalyzes two rounds of oxidation to furnish conidiogenone. The sequence is that of Conidiogenone synthase from Penicillium roqueforti (strain FM164).